The primary structure comprises 259 residues: Hydroxyacylglutathione hydrolase (259 aa).

Residues His-56, His-58, Asp-60, His-61, His-112, Asp-133, and His-171 each coordinate Zn(2+).

Belongs to the metallo-beta-lactamase superfamily. Glyoxalase II family. As to quaternary structure, monomer. It depends on Zn(2+) as a cofactor.

It carries out the reaction an S-(2-hydroxyacyl)glutathione + H2O = a 2-hydroxy carboxylate + glutathione + H(+). It functions in the pathway secondary metabolite metabolism; methylglyoxal degradation; (R)-lactate from methylglyoxal: step 2/2. Its function is as follows. Thiolesterase that catalyzes the hydrolysis of S-D-lactoyl-glutathione to form glutathione and D-lactic acid. The polypeptide is Hydroxyacylglutathione hydrolase (Pseudomonas entomophila (strain L48)).